A 236-amino-acid chain; its full sequence is MKLNISYPANGTQKCIDIEDEHKLRVFYEKRMGQEVEGDTVGDEFKGYIFRITGGNDKQGFPMKQGVMHPTRVKLLLAKGHSCYRPRRTGERKRKSVRGCIVAQDLAVLALSVVKQGDSDIEGLTDTTTPKRLGPKRANNIRKFFGLTKEDDVRQFVVRREVVKGDKKYTKAPKIQRLVTPQTLQRKRALKAQKVKNAQQQRDAAAEYAQLLAQRLHERKAERAEIKKRRASSLKA.

A phosphoserine mark is found at S232 and S233.

Belongs to the eukaryotic ribosomal protein eS6 family. In terms of processing, phosphorylated.

The polypeptide is Small ribosomal subunit protein eS6 (RPS6) (Debaryomyces hansenii (strain ATCC 36239 / CBS 767 / BCRC 21394 / JCM 1990 / NBRC 0083 / IGC 2968) (Yeast)).